The sequence spans 456 residues: 26S proteasome non-ATPase regulatory subunit 12 (456 aa).

Ala2 carries the N-acetylalanine modification. Lys92 participates in a covalent cross-link: Glycyl lysine isopeptide (Lys-Gly) (interchain with G-Cter in SUMO1); alternate. A Glycyl lysine isopeptide (Lys-Gly) (interchain with G-Cter in SUMO2); alternate cross-link involves residue Lys92. Residues 242 to 420 enclose the PCI domain; the sequence is SICKHYRAIY…GVINFQRPKD (179 aa). At Lys368 the chain carries N6-acetyllysine.

Belongs to the proteasome subunit p55 family. In terms of assembly, component of the 19S proteasome regulatory particle complex. The 26S proteasome consists of a 20S core particle (CP) and two 19S regulatory subunits (RP). The regulatory particle is made of a lid composed of 9 subunits including PSMD12, a base containing 6 ATPases and few additional components. Interacts with ERCC6.

Functionally, component of the 26S proteasome, a multiprotein complex involved in the ATP-dependent degradation of ubiquitinated proteins. This complex plays a key role in the maintenance of protein homeostasis by removing misfolded or damaged proteins, which could impair cellular functions, and by removing proteins whose functions are no longer required. Therefore, the proteasome participates in numerous cellular processes, including cell cycle progression, apoptosis, or DNA damage repair. The chain is 26S proteasome non-ATPase regulatory subunit 12 (Psmd12) from Mus musculus (Mouse).